An 860-amino-acid chain; its full sequence is Transcription factor E2F8 (860 aa).

The segment at 1-114 (MENQKENLFS…NEKSQPSRKE (114 aa)) is disordered. Ser71 is subject to Phosphoserine. Composition is skewed to basic and acidic residues over residues 74–84 (IRSRDQKRGLS) and 92–114 (EARD…SRKE). 2 consecutive DNA-binding regions follow at residues 112–181 (RKEK…TWHG) and 261–347 (RKDK…KWTG). 2 disordered regions span residues 407–433 (RRKI…PPVP) and 533–616 (TPPH…PKED). Residues 411-426 (SSAPSSPVKSSKAESS) show a composition bias toward low complexity. Ser412 and Ser416 each carry phosphoserine. Residues 542–554 (VCPTQSSNATGSK) are compositionally biased toward polar residues. 2 stretches are compositionally biased toward basic and acidic residues: residues 555 to 565 (DPTDAPTEKTA) and 586 to 596 (RSKETTGDRGT).

This sequence belongs to the E2F/DP family. Homodimer and heterodimer: mainly forms homodimers and, to a lesser extent, heterodimers with E2F8. Dimerization is important for DNA-binding. Interacts with HIF1A.

It localises to the nucleus. Atypical E2F transcription factor that participates in various processes such as angiogenesis and polyploidization of specialized cells. Mainly acts as a transcription repressor that binds DNA independently of DP proteins and specifically recognizes the E2 recognition site 5'-TTTC[CG]CGC-3'. Directly represses transcription of classical E2F transcription factors such as E2F1: component of a feedback loop in S phase by repressing the expression of E2F1, thereby preventing p53/TP53-dependent apoptosis. Plays a key role in polyploidization of cells in placenta and liver by regulating the endocycle, probably by repressing genes promoting cytokinesis and antagonizing action of classical E2F proteins (E2F1, E2F2 and/or E2F3). Required for placental development by promoting polyploidization of trophoblast giant cells. Acts as a promoter of sprouting angiogenesis, possibly by acting as a transcription activator: associates with HIF1A, recognizes and binds the VEGFA promoter, which is different from canonical E2 recognition site, and activates expression of the VEGFA gene. The polypeptide is Transcription factor E2F8 (E2f8) (Rattus norvegicus (Rat)).